The following is a 129-amino-acid chain: Ribonuclease P protein component (129 aa).

The protein belongs to the RnpA family. As to quaternary structure, consists of a catalytic RNA component (M1 or rnpB) and a protein subunit.

It carries out the reaction Endonucleolytic cleavage of RNA, removing 5'-extranucleotides from tRNA precursor.. Its function is as follows. RNaseP catalyzes the removal of the 5'-leader sequence from pre-tRNA to produce the mature 5'-terminus. It can also cleave other RNA substrates such as 4.5S RNA. The protein component plays an auxiliary but essential role in vivo by binding to the 5'-leader sequence and broadening the substrate specificity of the ribozyme. The polypeptide is Ribonuclease P protein component (Corynebacterium jeikeium (strain K411)).